The primary structure comprises 295 residues: GTP-binding protein GEM (295 aa).

The disordered stretch occupies residues 39-64; the sequence is CNLRNRHSTAPEEHCRRSWSSDSTDS. GTP-binding positions include 81 to 88 and 190 to 193; these read GEQGVGKS and NKSD. The interval 265 to 284 is calmodulin-binding; the sequence is ARRFWGKIVAKNNKNMAFKL.

Belongs to the small GTPase superfamily. RGK family. In terms of assembly, interacts with calmodulin in a Ca(2+)-dependent manner. Calmodulin binding significantly decreases GTP binding. Binds ROCK1. Post-translationally, phosphorylated on tyrosine residues.

Its subcellular location is the cell membrane. In terms of biological role, could be a regulatory protein, possibly participating in receptor-mediated signal transduction at the plasma membrane. Has guanine nucleotide-binding activity but undetectable intrinsic GTPase activity. This Mus musculus (Mouse) protein is GTP-binding protein GEM (Gem).